The following is a 395-amino-acid chain: Vacuolar protease A (395 aa).

Residues 1–18 form the signal peptide; the sequence is MKGSLLLAGATLLGCTSA. Positions 19-72 are cleaved as a propeptide — activation peptide; that stretch reads KLHSLKLKKVSLKEQLEHADIDVQIKSLGQKYMGIRPGQHEQQMFKEQTPIEAE. The 306-residue stretch at 87 to 392 folds into the Peptidase A1 domain; sequence YFSEISIGTP…DLGKGTVGLA (306 aa). The active site involves aspartate 105. A disulfide bridge links cysteine 118 with cysteine 123. An N-linked (GlcNAc...) asparagine glycan is attached at asparagine 140. Residue aspartate 289 is part of the active site. Residues cysteine 318 and cysteine 351 are joined by a disulfide bond. N-linked (GlcNAc...) asparagine glycosylation occurs at asparagine 335.

The protein belongs to the peptidase A1 family.

It is found in the vacuole lumen. Its subcellular location is the secreted. It catalyses the reaction Hydrolysis of proteins with broad specificity for peptide bonds. Cleaves -Leu-Leu-|-Val-Tyr- bond in a synthetic substrate. Does not act on esters of Tyr or Arg.. Functionally, vacuolar aspartic endopeptidase which is probably also secreted and contributes to virulence. This is Vacuolar protease A (PEP2) from Arthroderma otae (strain ATCC MYA-4605 / CBS 113480) (Microsporum canis).